Here is a 442-residue protein sequence, read N- to C-terminus: 3-phosphoshikimate 1-carboxyvinyltransferase (442 aa).

3-phosphoshikimate contacts are provided by Lys-25, Ser-26, and Arg-30. Lys-25 is a phosphoenolpyruvate binding site. The phosphoenolpyruvate site is built by Gly-97 and Arg-125. Positions 170, 172, 323, and 350 each coordinate 3-phosphoshikimate. Gln-172 contributes to the phosphoenolpyruvate binding site. Asp-323 serves as the catalytic Proton acceptor. Phosphoenolpyruvate-binding residues include Arg-354 and Arg-399.

The protein belongs to the EPSP synthase family. Monomer.

It is found in the cytoplasm. It carries out the reaction 3-phosphoshikimate + phosphoenolpyruvate = 5-O-(1-carboxyvinyl)-3-phosphoshikimate + phosphate. It functions in the pathway metabolic intermediate biosynthesis; chorismate biosynthesis; chorismate from D-erythrose 4-phosphate and phosphoenolpyruvate: step 6/7. Catalyzes the transfer of the enolpyruvyl moiety of phosphoenolpyruvate (PEP) to the 5-hydroxyl of shikimate-3-phosphate (S3P) to produce enolpyruvyl shikimate-3-phosphate and inorganic phosphate. The chain is 3-phosphoshikimate 1-carboxyvinyltransferase from Bartonella quintana (strain Toulouse) (Rochalimaea quintana).